A 788-amino-acid polypeptide reads, in one-letter code: DNA ligase (788 aa).

NAD(+) contacts are provided by residues 35–39 (DAEYD), 84–85 (SL), and Glu124. Lys126 serves as the catalytic N6-AMP-lysine intermediate. NAD(+)-binding residues include Arg147, Glu184, Lys300, and Lys324. Residues Cys418, Cys421, Cys448, and Cys454 each contribute to the Zn(2+) site. A BRCT domain is found at 707–788 (AEGLPLAGQT…FIERLAQLGS (82 aa)).

Belongs to the NAD-dependent DNA ligase family. LigA subfamily. The cofactor is Mg(2+). Requires Mn(2+) as cofactor.

It catalyses the reaction NAD(+) + (deoxyribonucleotide)n-3'-hydroxyl + 5'-phospho-(deoxyribonucleotide)m = (deoxyribonucleotide)n+m + AMP + beta-nicotinamide D-nucleotide.. Functionally, DNA ligase that catalyzes the formation of phosphodiester linkages between 5'-phosphoryl and 3'-hydroxyl groups in double-stranded DNA using NAD as a coenzyme and as the energy source for the reaction. It is essential for DNA replication and repair of damaged DNA. The sequence is that of DNA ligase from Stutzerimonas stutzeri (strain A1501) (Pseudomonas stutzeri).